The chain runs to 400 residues: MTQFASPVLHSLLDTDAYKLHMQQAVFHHYYDVHVAAEFRCRGDDLLGIYADAIREQVQAMQHLRLQDDEYQWLSALPFFKADYLNWLREFRFNPEQVTVSNDNGKLDIRLSGPWREVILWEVPLLAVISEMVHRYRSPQADVAQALDTLESKLADFSALTAGLDMSRFHLMDFGTRRRFSREVQETIVKRLQQESWFVGTSNYDLARRLSLTPMGTQAHEWFQAHQQISPDLANSQRAALAAWLEEYPDQLGIALTDCITMDAFLRDFGVEFASRYQGLRHDSGDPVEWGEKAIAHYEKLGIDPQSKTLVFSDNLDLRKAVELYRHFSSRVQLSFGIGTRLTCDIPQVKPLNIVIKLVECNGKPVAKLSDSPGKTICHDKAFVRALRKAFDLPHIKKAS.

Histidine 220 is subject to Phosphohistidine; by autocatalysis.

It belongs to the NAPRTase family. Post-translationally, transiently phosphorylated on a His residue during the reaction cycle. Phosphorylation strongly increases the affinity for substrates and increases the rate of nicotinate D-ribonucleotide production. Dephosphorylation regenerates the low-affinity form of the enzyme, leading to product release.

It carries out the reaction nicotinate + 5-phospho-alpha-D-ribose 1-diphosphate + ATP + H2O = nicotinate beta-D-ribonucleotide + ADP + phosphate + diphosphate. It participates in cofactor biosynthesis; NAD(+) biosynthesis; nicotinate D-ribonucleotide from nicotinate: step 1/1. In terms of biological role, catalyzes the synthesis of beta-nicotinate D-ribonucleotide from nicotinate and 5-phospho-D-ribose 1-phosphate at the expense of ATP. This is Nicotinate phosphoribosyltransferase from Escherichia coli O17:K52:H18 (strain UMN026 / ExPEC).